The primary structure comprises 323 residues: tRNA U34 carboxymethyltransferase (323 aa).

Residues Lys91, Trp105, Lys110, Gly130, 152–154, 181–182, Met196, Tyr200, and Arg315 contribute to the carboxy-S-adenosyl-L-methionine site; these read DPS and IE.

Belongs to the class I-like SAM-binding methyltransferase superfamily. CmoB family. As to quaternary structure, homotetramer.

The enzyme catalyses carboxy-S-adenosyl-L-methionine + 5-hydroxyuridine(34) in tRNA = 5-carboxymethoxyuridine(34) in tRNA + S-adenosyl-L-homocysteine + H(+). In terms of biological role, catalyzes carboxymethyl transfer from carboxy-S-adenosyl-L-methionine (Cx-SAM) to 5-hydroxyuridine (ho5U) to form 5-carboxymethoxyuridine (cmo5U) at position 34 in tRNAs. The protein is tRNA U34 carboxymethyltransferase of Vibrio atlanticus (strain LGP32) (Vibrio splendidus (strain Mel32)).